A 403-amino-acid polypeptide reads, in one-letter code: O-succinylhomoserine sulfhydrylase (403 aa).

An N6-(pyridoxal phosphate)lysine modification is found at Lys219.

Belongs to the trans-sulfuration enzymes family. MetZ subfamily. As to quaternary structure, homotetramer. The cofactor is pyridoxal 5'-phosphate.

It carries out the reaction O-succinyl-L-homoserine + hydrogen sulfide = L-homocysteine + succinate. Its pathway is amino-acid biosynthesis; L-methionine biosynthesis via de novo pathway; L-homocysteine from O-succinyl-L-homoserine: step 1/1. Its function is as follows. Catalyzes the formation of L-homocysteine from O-succinyl-L-homoserine (OSHS) and hydrogen sulfide. Cannot use the other activated form of L-homoserine, O-acetyl-L-homoserine, as a substrate. The sequence is that of O-succinylhomoserine sulfhydrylase from Pseudomonas aeruginosa (strain ATCC 15692 / DSM 22644 / CIP 104116 / JCM 14847 / LMG 12228 / 1C / PRS 101 / PAO1).